Reading from the N-terminus, the 319-residue chain is Vomeronasal type-1 receptor 51 (319 aa).

The Extracellular segment spans residues 1-31 (MNEILFFSPQPLFSHMMNENSRVHTHSNLRH). The chain crosses the membrane as a helical span at residues 32 to 52 (IFFSEIGIGISGNSFLLLFHI). Over 53–65 (LKFIHGHRSRLSD) the chain is Cytoplasmic. A helical transmembrane segment spans residues 66–86 (LPIGLLSLIHLLMLLVMAFIA). The Extracellular portion of the chain corresponds to 87–109 (TDIFISWRGWDDIICKFLVYLYR). Cys101 and Cys188 are disulfide-bonded. The helical transmembrane segment at 110–130 (VLRGLSLCTTSMLSVLQAIIL) threads the bilayer. Over 131 to 150 (SPRSSCLAKFKRKSLHHISC) the chain is Cytoplasmic. A helical membrane pass occupies residues 151–171 (AILFLSVLYMLIGSQLLVSII). Over 172 to 203 (ATPNLTTNDFIYVTQSCSILPLSYVMQSMFST) the chain is Extracellular. An N-linked (GlcNAc...) asparagine glycan is attached at Asn175. A helical transmembrane segment spans residues 204–224 (LLVIRDVFLISLMVLSTWYMV). The Cytoplasmic portion of the chain corresponds to 225–254 (ALLCRHRKKTQHLQGISLSPKTSPKQRATQ). A helical transmembrane segment spans residues 255-275 (TLLMLMSFFVLMTIYDTIVSC). Topologically, residues 276 to 285 (SRTMFLNDPT) are extracellular. A helical membrane pass occupies residues 286–306 (SYNMQIFVVHIYATVSPFVFM). Residues 307 to 319 (STEKHIVNCLRSV) are Cytoplasmic-facing.

It belongs to the G-protein coupled receptor 1 family. As to expression, expressed in a subset of sensory neurons located in the apical layer of the vomeronasal organ.

The protein resides in the cell membrane. Putative pheromone receptor implicated in the regulation of social as well as reproductive behavior. This Mus musculus (Mouse) protein is Vomeronasal type-1 receptor 51 (Vmn1r51).